We begin with the raw amino-acid sequence, 369 residues long: tRNA-specific 2-thiouridylase MnmA (369 aa).

ATP is bound by residues 12–19 (GMSGGVDS) and methionine 38. The tract at residues 98-100 (NPD) is interaction with target base in tRNA. Cysteine 103 serves as the catalytic Nucleophile. Cysteine 103 and cysteine 200 form a disulfide bridge. An ATP-binding site is contributed by glycine 128. Residues 150–152 (KDQ) are interaction with tRNA. Cysteine 200 serves as the catalytic Cysteine persulfide intermediate. The tract at residues 312-313 (RY) is interaction with tRNA.

Belongs to the MnmA/TRMU family.

Its subcellular location is the cytoplasm. It catalyses the reaction S-sulfanyl-L-cysteinyl-[protein] + uridine(34) in tRNA + AH2 + ATP = 2-thiouridine(34) in tRNA + L-cysteinyl-[protein] + A + AMP + diphosphate + H(+). Catalyzes the 2-thiolation of uridine at the wobble position (U34) of tRNA, leading to the formation of s(2)U34. The sequence is that of tRNA-specific 2-thiouridylase MnmA from Tolumonas auensis (strain DSM 9187 / NBRC 110442 / TA 4).